We begin with the raw amino-acid sequence, 373 residues long: Pectin lyase D (373 aa).

Positions 1–19 are cleaved as a signal peptide; that stretch reads MKYAAALTAIAALAARAAA. 2 disulfides stabilise this stretch: cysteine 82-cysteine 101 and cysteine 91-cysteine 225. A glycan (N-linked (GlcNAc...) asparagine) is linked at asparagine 128. The active site involves arginine 255. N-linked (GlcNAc...) asparagine glycosylation occurs at asparagine 274. Residues cysteine 321 and cysteine 329 are joined by a disulfide bond. A glycan (N-linked (GlcNAc...) asparagine) is linked at asparagine 348. Positions 354 to 366 are enriched in low complexity; the sequence is LPSADAASTSPAS. The segment at 354–373 is disordered; it reads LPSADAASTSPASNAGQGNL.

It belongs to the polysaccharide lyase 1 family. Post-translationally, may be O-glycosylated; does not contain N-acetylglucosamine.

It is found in the secreted. It catalyses the reaction Eliminative cleavage of (1-&gt;4)-alpha-D-galacturonan methyl ester to give oligosaccharides with 4-deoxy-6-O-methyl-alpha-D-galact-4-enuronosyl groups at their non-reducing ends.. Its function is as follows. Pectinolytic enzymes consist of four classes of enzymes: pectin lyase, polygalacturonase, pectin methylesterase and rhamnogalacturonase. Among pectinolytic enzymes, pectin lyase is the most important in depolymerization of pectin, since it cleaves internal glycosidic bonds of highly methylated pectins. This is Pectin lyase D (pelD) from Aspergillus niger.